We begin with the raw amino-acid sequence, 921 residues long: Short transient receptor potential channel 3 (921 aa).

Residues 1 to 73 form a disordered region; that stretch reads MSTKVRKCKE…PPFSHGPDLS (73 aa). Over 1-459 the chain is Cytoplasmic; it reads MSTKVRKCKE…KILRSPFMKF (459 aa). Acidic residues predominate over residues 19–31; sequence PEEEEDEGEDEGA. ANK repeat units follow at residues 111–140, 146–175, 177–203, and 232–261; these read AEEERFLDAAEYGNIPVVRKMLEESKTLNV, MGQNALQLAVGNEHLEVTELLLKKENLARI, DALLLAISKGYVRIVEAILNHPGFAAS, and PDITPIILAAHCQKYEVVHMLLMKGARIER. Glutamate 158 provides a ligand contact to Ca(2+). The chain crosses the membrane as a helical span at residues 460–477; that stretch reads VAHAASFIIFLGLLVFNA. At 478 to 508 the chain is on the extracellular side; that stretch reads SDRFEGITTLPNITVTDYPKQIFRVKTTQFT. N-linked (GlcNAc...) asparagine glycosylation occurs at asparagine 489. A helical transmembrane segment spans residues 509–527; it reads WTEMLIMVWVLGMMWSECK. Ca(2+) contacts are provided by glutamate 525, glutamate 528, and asparagine 543. At 528 to 540 the chain is on the cytoplasmic side; the sequence is ELWLEGPREYILQ. Residues 541-562 traverse the membrane as a helical segment; it reads LWNVLDFGMLSIFIAAFTARFL. Over 563 to 606 the chain is Extracellular; it reads AFLQATKAQQYVDSYVQESDLSEVTLPPEIQYFTYARDKWLPSD. A helical transmembrane segment spans residues 607 to 630; that stretch reads PQIISEGLYAIAVVLSFSRIAYIL. At 631 to 649 the chain is on the cytoplasmic side; sequence PANESFGPLQISLGRTVKD. The stretch at 634-663 is one ANK 5 repeat; sequence ESFGPLQISLGRTVKDIFKFMVLFIMVFFA. Residues 650–673 traverse the membrane as a helical segment; the sequence is IFKFMVLFIMVFFAFMIGMFILYS. At 674-713 the chain is on the extracellular side; sequence YYLGAKVNAAFTTVEESFKTLFWSIFGLSEVTSVVLKYDH. A helical membrane pass occupies residues 714 to 739; the sequence is KFIENIGYVLYGIYNVTMVVVLLNML. Residues 740–921 are Cytoplasmic-facing; that stretch reads IAMINSSYQE…KLNPSMLRCE (182 aa). The binds to IP3R3 stretch occupies residues 850-870; sequence QIMKRLIKRYVLKAQVDKEND. Glutamate 871, glutamate 874, glutamate 876, and aspartate 883 together coordinate Ca(2+).

Belongs to the transient receptor (TC 1.A.4) family. STrpC subfamily. TRPC3 sub-subfamily. As to quaternary structure, homotetramer. Interacts with ITPR1. Interacts with ITPR3. Interacts with MX1. Interacts with RNF24. Interacts with JPH2; the interaction is involved in maintaining Ca(2+) homeostasis in skeletal muscle and is mediated by JPH2 'Ser-165' phosphorylation. Interacts with isoform short of TRPC1. Expressed predominantly in brain and at much lower levels in ovary, colon, small intestine, lung, prostate, placenta and testis.

The protein resides in the cell membrane. The enzyme catalyses Ca(2+)(in) = Ca(2+)(out). Its activity is regulated as follows. Activated by diacylglycerol (DAG) in a membrane-delimited fashion, independently of protein kinase C. Activated by inositol 1,4,5-triphosphate receptors (ITPR) with bound IP3. May be activated by internal calcium store depletion. Inhibited by intracellular Ca(2+). Its function is as follows. Forms a receptor-activated non-selective calcium permeant cation channel. Functionally, forms a receptor-activated non-selective calcium permeant cation channel. May be operated by a phosphatidylinositol second messenger system activated by receptor tyrosine kinases or G-protein coupled receptors. The sequence is that of Short transient receptor potential channel 3 (TRPC3) from Homo sapiens (Human).